A 411-amino-acid polypeptide reads, in one-letter code: Serine--tRNA ligase (411 aa).

Position 226-228 (226-228) interacts with L-serine; that stretch reads TSE. Residue 257–259 coordinates ATP; that stretch reads RQE. E280 contacts L-serine. 344 to 347 provides a ligand contact to ATP; that stretch reads EISS. Residue S379 coordinates L-serine.

Belongs to the class-II aminoacyl-tRNA synthetase family. Type-1 seryl-tRNA synthetase subfamily. Homodimer. The tRNA molecule binds across the dimer.

The protein resides in the cytoplasm. It catalyses the reaction tRNA(Ser) + L-serine + ATP = L-seryl-tRNA(Ser) + AMP + diphosphate + H(+). The enzyme catalyses tRNA(Sec) + L-serine + ATP = L-seryl-tRNA(Sec) + AMP + diphosphate + H(+). It participates in aminoacyl-tRNA biosynthesis; selenocysteinyl-tRNA(Sec) biosynthesis; L-seryl-tRNA(Sec) from L-serine and tRNA(Sec): step 1/1. Its function is as follows. Catalyzes the attachment of serine to tRNA(Ser). Is also able to aminoacylate tRNA(Sec) with serine, to form the misacylated tRNA L-seryl-tRNA(Sec), which will be further converted into selenocysteinyl-tRNA(Sec). The chain is Serine--tRNA ligase from Campylobacter lari (strain RM2100 / D67 / ATCC BAA-1060).